The sequence spans 258 residues: Phosphate import ATP-binding protein PstB (258 aa).

Residues 5 to 247 (LDLKDVNIYY…EKIFSNPRQK (243 aa)) enclose the ABC transporter domain. ATP is bound at residue 37–44 (GPSGCGKS).

The protein belongs to the ABC transporter superfamily. Phosphate importer (TC 3.A.1.7) family. The complex is composed of two ATP-binding proteins (PstB), two transmembrane proteins (PstC and PstA) and a solute-binding protein (PstS).

The protein resides in the cell membrane. It carries out the reaction phosphate(out) + ATP + H2O = ADP + 2 phosphate(in) + H(+). Functionally, part of the ABC transporter complex PstSACB involved in phosphate import. Responsible for energy coupling to the transport system. This is Phosphate import ATP-binding protein PstB from Mycolicibacterium smegmatis (Mycobacterium smegmatis).